The chain runs to 250 residues: Uracil-DNA glycosylase (250 aa).

D78 (proton acceptor) is an active-site residue. The disordered stretch occupies residues 228–250 (RGQKPVDWSGEQNNASRQGKFAL).

It belongs to the uracil-DNA glycosylase (UDG) superfamily. UNG family.

The protein localises to the cytoplasm. The enzyme catalyses Hydrolyzes single-stranded DNA or mismatched double-stranded DNA and polynucleotides, releasing free uracil.. Functionally, excises uracil residues from the DNA which can arise as a result of misincorporation of dUMP residues by DNA polymerase or due to deamination of cytosine. The polypeptide is Uracil-DNA glycosylase (Bordetella bronchiseptica (strain ATCC BAA-588 / NCTC 13252 / RB50) (Alcaligenes bronchisepticus)).